The chain runs to 250 residues: Deoxynucleoside kinase (250 aa).

27-35 serves as a coordination point for ATP; it reads GNIGSGKTT. Glutamate 52, tyrosine 70, and glutamine 81 together coordinate substrate. The active-site Proton acceptor is the glutamate 104. Substrate is bound by residues arginine 105 and glutamate 172. Phosphoserine occurs at positions 236, 241, and 243.

The protein belongs to the DCK/DGK family. In terms of assembly, monomer.

The enzyme catalyses a 2'-deoxyribonucleoside + ATP = a 2'-deoxyribonucleoside 5'-phosphate + ADP + H(+). Subject to feedback inhibition by dTTP. Functionally, deoxyribonucleoside kinase that has a broad specificity phosphorylating thymidine, 2'-deoxyriboadenosine, 2'-deoxyribocytidine and 2'-deoxyriboguanosine. Specificity is higher for pyrimidine nucleosides. Several anti-viral and anti-cancer nucleoside analogs are also efficiently phosphorylated. In Drosophila melanogaster (Fruit fly), this protein is Deoxynucleoside kinase (dnk).